Reading from the N-terminus, the 836-residue chain is Conserved oligomeric Golgi complex subunit 7 (836 aa).

2 coiled-coil regions span residues 29–49 (QDSL…ASEE) and 107–127 (LARV…LQDA). The tract at residues 246 to 265 (KLANERSESQRLSSGDEFQS) is disordered.

Belongs to the COG7 family. Component of the conserved oligomeric Golgi complex which is composed of eight different subunits and is required for normal Golgi morphology and localization. Interacts with COG5 and COG6.

The protein localises to the golgi apparatus membrane. Required for normal Golgi function. Necessary for embryo development and pigmentation, especially for the expansion of cells and organs, and for the formation of the organized shoot apical meristem (SAM). Probably involved in the generation of the extra-cellular matrix. The chain is Conserved oligomeric Golgi complex subunit 7 from Arabidopsis thaliana (Mouse-ear cress).